A 278-amino-acid polypeptide reads, in one-letter code: Probable CCR4-associated factor 1 homolog 5 (278 aa).

The a divalent metal cation site is built by Asp30, Glu32, Asp145, and Asp217.

It belongs to the CAF1 family. Component of the CCR4-NOT complex, at least composed of CRR4 and CAF1 proteins. A divalent metal cation serves as cofactor.

It is found in the nucleus. The protein localises to the cytoplasm. The catalysed reaction is Exonucleolytic cleavage of poly(A) to 5'-AMP.. Functionally, ubiquitous transcription factor required for a diverse set of processes. It is a component of the CCR4 complex involved in the control of gene expression. The chain is Probable CCR4-associated factor 1 homolog 5 (CAF1-5) from Arabidopsis thaliana (Mouse-ear cress).